Reading from the N-terminus, the 405-residue chain is Glutamate-pyruvate aminotransferase AlaA (405 aa).

Residues Gly-41 and Asn-179 each coordinate L-alanine. Lys-240 is modified (N6-(pyridoxal phosphate)lysine). Residue Arg-378 coordinates L-alanine.

Belongs to the class-I pyridoxal-phosphate-dependent aminotransferase family. Homodimer. Pyridoxal 5'-phosphate serves as cofactor.

The protein resides in the cytoplasm. The enzyme catalyses L-alanine + 2-oxoglutarate = pyruvate + L-glutamate. The protein operates within amino-acid biosynthesis; L-alanine biosynthesis. Functionally, involved in the biosynthesis of alanine. Catalyzes the transamination of pyruvate by glutamate, leading to the formation of L-alanine and 2-oxoglutarate. Is also able to catalyze the reverse reaction. The polypeptide is Glutamate-pyruvate aminotransferase AlaA (Escherichia coli (strain K12)).